Here is a 372-residue protein sequence, read N- to C-terminus: Isoliquiritigenin 2'-O-methyltransferase (372 aa).

Positions 217, 240, 260, 261, and 274 each coordinate S-adenosyl-L-methionine. The active-site Proton acceptor is histidine 278.

Belongs to the class I-like SAM-binding methyltransferase superfamily. Cation-independent O-methyltransferase family. COMT subfamily. Monomer. Homodimer. In terms of tissue distribution, roots (at protein level). Expressed mainly in roots, and to a lesser extent in root nodules. In the roots, expression is not detected in the root tip or the cells immediately behind the tip, but is detected in tissues starting 1.5-2.0 mm distal to the root tip. Detected in the epidermal and cortical cells of 2 day old roots, with lower levels in vascular tissue.

The enzyme catalyses isoliquiritigenin + S-adenosyl-L-methionine = 2'-O-methylisoliquiritigenin + S-adenosyl-L-homocysteine + H(+). It catalyses the reaction licodione + S-adenosyl-L-methionine = 2'-O-methyllicodione + S-adenosyl-L-homocysteine + H(+). Its activity is regulated as follows. Inhibited by 1 mM Co(2+), Cu(2+), Zn(2+) or Fe(2+). Non-competitively inhibited by S-adenosyl-L-homocysteine. Competitively inhibited by 2'-O-methylisoliquiritigenin. Its function is as follows. Methylates the 2'-hydroxyl of isoliquiritigenin and licodione. Does not methylate narigenin chalcone, caffeic acid or daidzein. Involved in the root nodulation initiation by promoting the biosynthesis of nod-inducing molecules. The protein is Isoliquiritigenin 2'-O-methyltransferase of Medicago sativa (Alfalfa).